Consider the following 276-residue polypeptide: Urease accessory protein UreD (276 aa).

Belongs to the UreD family. UreD, UreF and UreG form a complex that acts as a GTP-hydrolysis-dependent molecular chaperone, activating the urease apoprotein by helping to assemble the nickel containing metallocenter of UreC. The UreE protein probably delivers the nickel.

The protein resides in the cytoplasm. Its function is as follows. Required for maturation of urease via the functional incorporation of the urease nickel metallocenter. In Bradyrhizobium diazoefficiens (strain JCM 10833 / BCRC 13528 / IAM 13628 / NBRC 14792 / USDA 110), this protein is Urease accessory protein UreD.